The primary structure comprises 161 residues: Regulatory protein RecX (161 aa).

The protein belongs to the RecX family.

It is found in the cytoplasm. Its function is as follows. Modulates RecA activity. The protein is Regulatory protein RecX of Thermotoga petrophila (strain ATCC BAA-488 / DSM 13995 / JCM 10881 / RKU-1).